Reading from the N-terminus, the 347-residue chain is UDP-3-O-acylglucosamine N-acyltransferase 1 (347 aa).

The active-site Proton acceptor is the His246.

Belongs to the transferase hexapeptide repeat family. LpxD subfamily. Homotrimer.

The catalysed reaction is a UDP-3-O-[(3R)-3-hydroxyacyl]-alpha-D-glucosamine + a (3R)-hydroxyacyl-[ACP] = a UDP-2-N,3-O-bis[(3R)-3-hydroxyacyl]-alpha-D-glucosamine + holo-[ACP] + H(+). It functions in the pathway bacterial outer membrane biogenesis; LPS lipid A biosynthesis. Catalyzes the N-acylation of UDP-3-O-acylglucosamine using 3-hydroxyacyl-ACP as the acyl donor. Is involved in the biosynthesis of lipid A, a phosphorylated glycolipid that anchors the lipopolysaccharide to the outer membrane of the cell. This chain is UDP-3-O-acylglucosamine N-acyltransferase 1, found in Francisella tularensis subsp. holarctica (strain LVS).